Consider the following 366-residue polypeptide: Zinc finger CCCH domain-containing protein 11 (366 aa).

The tract at residues 43 to 66 (LHQAVQPKPDPTKTAAKKKKEEEK) is disordered. Residues 54–79 (TKTAAKKKKEEEKAREKELNDLFKVA) are a coiled coil. 2 C3H1-type zinc fingers span residues 90-117 (DPKS…HDLN) and 160-198 (KPTD…HALP). The stretch at 208–234 (KALLEEESEKIAIEDEIEDQRKKVKTT) forms a coiled coil. Residues 293-338 (YERQEESEANEEPSNKNQDEGPSSSTSNGKEVEESDDEDINIDDDL) are disordered. Positions 312–321 (EGPSSSTSNG) are enriched in polar residues. Residues 325-338 (EESDDEDINIDDDL) show a composition bias toward acidic residues.

The protein is Zinc finger CCCH domain-containing protein 11 of Oryza sativa subsp. japonica (Rice).